The primary structure comprises 122 residues: MNSYNKQIGNIGEAVAENYLIQNGYIILDRNFSCRVGEIDIIGKDGDIISFLEVKSRYGNLYGSPGESVNFAKQYKIYKTAQLYILKKKLNRFYFRFDVIEIIFNNYNDDYSIRLIKDAFQL.

This sequence belongs to the UPF0102 family.

The chain is UPF0102 protein CTC_01256 from Clostridium tetani (strain Massachusetts / E88).